A 313-amino-acid chain; its full sequence is Homeobox protein knotted-1-like 2 (313 aa).

Residues Asp-13–Glu-40 form a disordered region. The span at Pro-14 to Ser-27 shows a compositional bias: low complexity. A compositionally biased stretch (gly residues) spans Pro-28–Gly-38. Positions Glu-205–Ile-225 constitute an ELK domain. Residues Leu-226 to Asn-289 constitute a DNA-binding region (homeobox; TALE-type). Residues Arg-282–Trp-313 are disordered.

This sequence belongs to the TALE/KNOX homeobox family. Isoform 1 is expressed in roots, leaf blades, leaf sheaths and flowers. Isoform 2 is expressed in leaf blades, leaf sheaths and flowers.

It is found in the nucleus. The polypeptide is Homeobox protein knotted-1-like 2 (HOS58) (Oryza sativa subsp. japonica (Rice)).